The following is a 1793-amino-acid chain: Protein TIC 214 (1793 aa).

A run of 6 helical transmembrane segments spans residues 11-31 (LVSLCLKIINSVIVVGLYYGF), 64-84 (FITGQLVMFISIYYAPLHIAL), 90-112 (ITVITLPYLLLYFLGNNQKNFLN), 129-149 (IFFQNLFFQLLNPFFLPSSIL), 172-192 (VGWLIGHVFFMKWIGLMLVWI), and 222-242 (IFLIFFFITCLYYLGRIPPIY). The tract at residues 1504–1524 (DIEEDYGESDSKKGGKDKNKK) is disordered.

This sequence belongs to the TIC214 family. In terms of assembly, part of the Tic complex.

Its subcellular location is the plastid. The protein resides in the chloroplast inner membrane. Its function is as follows. Involved in protein precursor import into chloroplasts. May be part of an intermediate translocation complex acting as a protein-conducting channel at the inner envelope. In Lotus japonicus (Lotus corniculatus var. japonicus), this protein is Protein TIC 214.